The chain runs to 154 residues: Protein X (154 aa).

The segment at 68–117 is mitochondrial targeting sequence; the sequence is PCALRFTSARRMETTVNAHGNLPKVLHKRTLGLSAMSTTDLEAYFKDCVF.

This sequence belongs to the orthohepadnavirus protein X family. As to quaternary structure, may form homodimer. May interact with host CEBPA, CFLAR, CREB1, DDB1, E4F1, HBXIP, HSPD1/HSP60, NFKBIA, POLR2E and SMAD4. Interacts with host SMC5-SMC6 complex and induces its degradation. Interacts with host TRPC4AP; leading to prevent ubiquitination of TRPC4AP. Interacts with host PLSCR1; this interaction promotes ubiquitination and degradation of HBx and impairs HBx-mediated cell proliferation. Post-translationally, a fraction may be phosphorylated in insect cells and HepG2 cells, a human hepatoblastoma cell line. Phosphorylated in vitro by host protein kinase C or mitogen-activated protein kinase. N-acetylated in insect cells.

The protein localises to the host cytoplasm. Its subcellular location is the host nucleus. It localises to the host mitochondrion. Functionally, multifunctional protein that plays a role in silencing host antiviral defenses and promoting viral transcription. Does not seem to be essential for HBV infection. May be directly involved in development of cirrhosis and liver cancer (hepatocellular carcinoma). Most of cytosolic activities involve modulation of cytosolic calcium. The effect on apoptosis is controversial depending on the cell types in which the studies have been conducted. May induce apoptosis by localizing in mitochondria and causing loss of mitochondrial membrane potential. May also modulate apoptosis by binding host CFLAR, a key regulator of the death-inducing signaling complex (DISC). Promotes viral transcription by using the host E3 ubiquitin ligase DDB1 to target the SMC5-SMC6 complex to proteasomal degradation. This host complex would otherwise bind to viral episomal DNA, and prevents its transcription. Moderately stimulates transcription of many different viral and cellular transcription elements. Promoters and enhancers stimulated by HBx contain DNA binding sites for NF-kappa-B, AP-1, AP-2, c-EBP, ATF/CREB, or the calcium-activated factor NF-AT. In Hepatitis B virus genotype B/C subtype adw (isolate Okinawa/pODW282/1998) (HBV-B), this protein is Protein X.